A 1138-amino-acid polypeptide reads, in one-letter code: MRIIKGRKRGKNKKPTLILKIHVIQAENIEALKTFNCNPVCFVTTNTFYSQKTNKLKNSNTHWNQTLRIKLPRNPTSEWLRIIVYDALPTGAPPTTPSRPRTTTANTSSSTLSNSGLSSHSHSSRNLNVTSKGNQTSTSINSVSSSATPAPSHSSSSLSTTGPGSTHKNRINSYLYLGEAKISLLDLFKRKDTTTSYKFSIEAQRYHLYDMKGGKDQDSLNCNFLVGDILLGFKLECNVKRTPTFQAFNAWRNELNTYLGRIDRNKARMRSSSSLPPPLEDMLSNSSAVSGNEIRREKPYSDTDLAHDEEVNAEDEIDAEESIEDMNSSGSICTERRYDIDNDTIFDSISEVVSLNDEELDILNDFEEADHPNVPDINVHDIDEDTRISLSSMITALDEYDIVEPEDVAKLPAVSENDITSVDDEESENQQESDEEFDIYNEDEREDSDFQSKEYIGSRLLHLQRGKHNKSYANYLYRRAKSNFFISKKEHAMGVVFMHIGAIKNLPALRNRLSKTNYEMDPFIVISFGRRVFKTSWRKHTLNPEFNEYAAFEVFPHETNFAFSIKVVDKDSFSFNDDVAKCELAWFDMLQQQQHENEWIPYEIPLDLTVEPAHAPKQPVLYSSFKYVSYPFLKKSFWKEAVDTSVNLERLDIIQVMLYLERLGSFTMADSFELFQHFNKSAWAGQSITRSQLVEGLQSWRKSTNFKRIWTCPRCMRSCKPTRNARRSKLVLENDLITHFAICTFSKEHKTLKPSYVSSAFASKRWFSKVLIKLTYGKYALGSNNANILVQDRDTGIIIEEKISAHVKLGMRIIYNGKSPESKKFRSLLKTLSIRQGKKFDSTASAKQIEPFIKFHSLDLSQCRDKDFKTFNEFFYRKLKPGSRLPESNNKEILFSPADSRCTVFPTIQESKEIWVKGRKFSIKKLANNYNPETFNDNNCSIGIFRLAPQDYHRFHSPCNGTIGKPVYVDGEYYTVNPMAVRSELDVFGENIRVIIPIDSPQFGKLLYIPIGAMMVGSILLTCKENDVVESGQELGYFKFGGSTIIIIIPHNNFMFDSDLVKNSSERIETLVKVGMSIGHTSNVNELKRIRIKVDDPKKIERIKRTISVSDENAKSTGNVTWEYHTLREMMNKDFAGL.

The C2 1 domain occupies M1–H122. 3 disordered regions span residues T90–T166, M269–L305, and A413–S448. Over residues S98–S121 the composition is skewed to low complexity. Positions R125–Q135 are enriched in polar residues. Residues T136 to T166 are compositionally biased toward low complexity. Residues E293–L305 show a composition bias toward basic and acidic residues. The segment covering S421–S448 has biased composition (acidic residues). Residues R478–I600 form the C2 2 domain. Positions 571, 574, and 577 each coordinate Ca(2+). Active-site charge relay system; for autoendoproteolytic cleavage activity residues include D899, H956, and S1043. The Schiff-base intermediate with substrate; via pyruvic acid; for decarboxylase activity role is filled by S1043. The residue at position 1043 (S1043) is a Pyruvic acid (Ser); by autocatalysis.

This sequence belongs to the phosphatidylserine decarboxylase family. PSD-B subfamily. Eukaryotic type II sub-subfamily. As to quaternary structure, heterodimer of a large membrane-associated beta subunit and a small pyruvoyl-containing alpha subunit. Interacts with pstB2/PDR17. This interaction may be a means to structurally tether the donor membrane (ER) harboring PstB2/PDR17 to acceptor membranes (Golgi/endosomes) harboring PSD2 during PtdSer transport to the site of PtdEtn synthesis. Pyruvate serves as cofactor. Ca(2+) is required as a cofactor. In terms of processing, is synthesized initially as an inactive proenzyme. Formation of the active enzyme involves a self-maturation process in which the active site pyruvoyl group is generated from an internal serine residue via an autocatalytic post-translational modification. Two non-identical subunits are generated from the proenzyme in this reaction, and the pyruvate is formed at the N-terminus of the alpha chain, which is derived from the carboxyl end of the proenzyme. The autoendoproteolytic cleavage occurs by a canonical serine protease mechanism, in which the side chain hydroxyl group of the serine supplies its oxygen atom to form the C-terminus of the beta chain, while the remainder of the serine residue undergoes an oxidative deamination to produce ammonia and the pyruvoyl prosthetic group on the alpha chain. During this reaction, the Ser that is part of the protease active site of the proenzyme becomes the pyruvoyl prosthetic group, which constitutes an essential element of the active site of the mature decarboxylase.

Its subcellular location is the golgi apparatus membrane. It localises to the endosome membrane. The catalysed reaction is a 1,2-diacyl-sn-glycero-3-phospho-L-serine + H(+) = a 1,2-diacyl-sn-glycero-3-phosphoethanolamine + CO2. Its pathway is phospholipid metabolism; phosphatidylethanolamine biosynthesis; phosphatidylethanolamine from CDP-diacylglycerol: step 2/2. Catalyzes the formation of phosphatidylethanolamine (PtdEtn) from phosphatidylserine (PtdSer). Plays a central role in phospholipid metabolism and in the interorganelle trafficking of phosphatidylserine. Phosphatidylethanolamine produced by PSD2 is insufficient to completely provide the PtdEtn pool required by mitochondria under respiratory conditions. PSD2 is also involved in the PtdSer transport step to the site of PtdEtn synthesis on the Golgi/endosome membranes. Required for normal heavy metal resistance. This is Phosphatidylserine decarboxylase proenzyme 2 from Saccharomyces cerevisiae (strain ATCC 204508 / S288c) (Baker's yeast).